The following is a 257-amino-acid chain: Imidazole glycerol phosphate synthase subunit HisF (257 aa).

Active-site residues include aspartate 11 and aspartate 130.

The protein belongs to the HisA/HisF family. As to quaternary structure, heterodimer of HisH and HisF.

It localises to the cytoplasm. It catalyses the reaction 5-[(5-phospho-1-deoxy-D-ribulos-1-ylimino)methylamino]-1-(5-phospho-beta-D-ribosyl)imidazole-4-carboxamide + L-glutamine = D-erythro-1-(imidazol-4-yl)glycerol 3-phosphate + 5-amino-1-(5-phospho-beta-D-ribosyl)imidazole-4-carboxamide + L-glutamate + H(+). The protein operates within amino-acid biosynthesis; L-histidine biosynthesis; L-histidine from 5-phospho-alpha-D-ribose 1-diphosphate: step 5/9. IGPS catalyzes the conversion of PRFAR and glutamine to IGP, AICAR and glutamate. The HisF subunit catalyzes the cyclization activity that produces IGP and AICAR from PRFAR using the ammonia provided by the HisH subunit. The sequence is that of Imidazole glycerol phosphate synthase subunit HisF from Shewanella loihica (strain ATCC BAA-1088 / PV-4).